The following is a 778-amino-acid chain: Aerobic respiration control sensor protein ArcB (778 aa).

The Cytoplasmic portion of the chain corresponds to 1–25; that stretch reads MKQIRLLAQYYVDLMMKLGLVRFSM. A helical transmembrane segment spans residues 26–46; the sequence is LLALALVVLAIVVQMAVTMVL. At 47–57 the chain is on the periplasmic side; it reads HGQVESIDVIR. Residues 58–78 traverse the membrane as a helical segment; it reads SIFFGLLITPWAVYFLSVVVE. At 79–778 the chain is on the cytoplasmic side; sequence QLEESRQRLS…KAWVAKATKK (700 aa). Positions 153 to 223 constitute a PAS domain; the sequence is QSSFLRSFLD…ETDEKVFRHN (71 aa). The region spanning 226 to 278 is the PAC domain; the sequence is LTYEQWLDYPDGRKACFEIRKVPYYDRVGKRHGLMGFGRDITERKRYQDALER. The Histidine kinase domain maps to 289-507; sequence TISHELRTPL…TFTLTIHAPS (219 aa). H292 is subject to Phosphohistidine; by autocatalysis. The 117-residue stretch at 527-643 folds into the Response regulatory domain; that stretch reads NVLLVEDIEL…ALTAMIKKFW (117 aa). Position 576 is a 4-aspartylphosphate (D576). The region spanning 678–771 is the HPt domain; it reads GPKLITDGLA…RHDVEVLKAW (94 aa). At H717 the chain carries Phosphohistidine.

Post-translationally, activation requires a sequential transfer of a phosphate group from a His in the primary transmitter domain, to an Asp in the receiver domain and to a His in the secondary transmitter domain.

The protein resides in the cell inner membrane. The enzyme catalyses ATP + protein L-histidine = ADP + protein N-phospho-L-histidine.. Member of the two-component regulatory system ArcB/ArcA. Sensor-regulator protein for anaerobic repression of the arc modulon. Activates ArcA via a four-step phosphorelay. ArcB can also dephosphorylate ArcA by a reverse phosphorelay involving His-717 and Asp-576. This is Aerobic respiration control sensor protein ArcB (arcB) from Escherichia coli (strain K12).